We begin with the raw amino-acid sequence, 665 residues long: MARSTLSKPLKNKVNPRGPLIPLILLMLRGVSTASPGSSPHQVYNITWEVTNGDRETVWATSGNHPLWTWWPDLTPDLCMLAHHGPSYWGLEYQSPFSSPPGPPCCSGGSSPGCSRDCEEPLTSLTPRCNTAWNRLKLDQTTHKSNEGFYVCPGPHRPRESKSCGGPDSFYCAYWGCETTGRAYWKPSSSWDFITVNNNLTSDQAVQVCKDNKWCNPLVIRFTDAGRRVTSWTTGHYWGLRLYVSGQDPGLTFGIRLRYQNLGPRVPIGPNPVLADQQPLSKPKPVKSPSVTKPPSGTPLSPTQLPPAGTENRLLNLVDGAYQALNLTSPDKTQECWLCLVAGPPYYEGVAVLGTYSNHTSAPANCSVASQHKLTLSEVTGQGLCIGAVPKTHQALCNTTQTSSRGSYYLVAPTGTMWACSTGLTPCISTTILNLTTDYCVLVELWPRVTYHSPSYVYGLFERSNRHKREPVSLTLALLLGGLTMGGIAAGIGTGTTALMATQQFQQLQAAVQDDLREVEKSISNLEKSLTSLSEVVLQNRRGLDLLFLKEGGLCAALKEECCFYADHTGLVRDSMAKLRERLNQRQKLFESTQGWFEGLFNRSPWFTTLISTIMGPLIVLLMILLFGPCILNRLVQFVKDRISVVQALVLTQQYHQLKPIEYEP.

The first 33 residues, 1-33 (MARSTLSKPLKNKVNPRGPLIPLILLMLRGVST), serve as a signal peptide directing secretion. Residues 34-267 (ASPGSSPHQV…RYQNLGPRVP (234 aa)) are receptor-binding domain (RBD). Over 34-610 (ASPGSSPHQV…FNRSPWFTTL (577 aa)) the chain is Extracellular. N-linked (GlcNAc...) asparagine; by host glycosylation occurs at N45. 5 disulfides stabilise this stretch: C79–C129, C105–C118, C106–C114, C152–C172, and C164–C177. Zn(2+) is bound at residue D117. The N-linked (GlcNAc...) asparagine; by host glycan is linked to N199. A disulfide bond links C209 and C215. The disordered stretch occupies residues 268–309 (IGPNPVLADQQPLSKPKPVKSPSVTKPPSGTPLSPTQLPPAG). Positions 281-299 (SKPKPVKSPSVTKPPSGTP) are enriched in low complexity. N-linked (GlcNAc...) asparagine; by host glycosylation occurs at N326. 6 disulfides stabilise this stretch: C336/C339, C336/C563, C366/C420, C385/C397, C427/C440, and C555/C562. The short motif at 336-339 (CWLC) is the CXXC element. Residues N358 and N365 are each glycosylated (N-linked (GlcNAc...) asparagine; by host). N-linked (GlcNAc...) asparagine; by host glycosylation is found at N398 and N434. Positions 472–492 (VSLTLALLLGGLTMGGIAAGI) are fusion peptide. Residues 500–537 (MATQQFQQLQAAVQDDLREVEKSISNLEKSLTSLSEVV) are a coiled coil. Residues 538-554 (LQNRRGLDLLFLKEGGL) form an immunosuppression region. The CX6CC motif lies at 555–563 (CAALKEECC). The helical transmembrane segment at 611 to 631 (ISTIMGPLIVLLMILLFGPCI) threads the bilayer. A lipid anchor (S-palmitoyl cysteine; by host) is attached at C630. The Cytoplasmic segment spans residues 632–665 (LNRLVQFVKDRISVVQALVLTQQYHQLKPIEYEP). The short motif at 655–658 (YHQL) is the YXXL motif; contains endocytosis signal element.

As to quaternary structure, the mature envelope protein (Env) consists of a trimer of SU-TM heterodimers attached by a labile interchain disulfide bond. The activated Env consists of SU monomers and TM trimers. Post-translationally, specific enzymatic cleavages in vivo yield mature proteins. Envelope glycoproteins are synthesized as an inactive precursor that is N-glycosylated and processed likely by host cell furin or by a furin-like protease in the Golgi to yield the mature SU and TM proteins. The cleavage site between SU and TM requires the minimal sequence [KR]-X-[KR]-R. The R-peptide is released from the C-terminus of the cytoplasmic tail of the TM protein upon particle formation as a result of proteolytic cleavage by the viral protease. Cleavage of this peptide is required for TM to become fusogenic. In terms of processing, the CXXC motif is highly conserved across a broad range of retroviral envelope proteins. It is thought to participate in the formation of a labile disulfide bond possibly with the CX6CC motif present in the transmembrane protein. Isomerization of the intersubunit disulfide bond to an SU intrachain disulfide bond is thought to occur upon receptor recognition in order to allow membrane fusion. The transmembrane protein is palmitoylated. Post-translationally, the R-peptide is palmitoylated.

It localises to the virion membrane. Its subcellular location is the host cell membrane. Its function is as follows. The surface protein (SU) attaches the virus to the host cell by binding to its receptor. Interaction with HECT ubiquitin ligases activates a thiol in a CXXC motif of the C-terminal domain, where the other Cys residue participates in the formation of the intersubunit disulfide. The activated thiol will attack the disulfide and cause its isomerization into a disulfide isomer within the motif. This leads to SU displacement and TM refolding, and is thought to activate its fusogenic potential by unmasking its fusion peptide. Fusion occurs at the host cell plasma membrane. In terms of biological role, the transmembrane protein (TM) acts as a class I viral fusion protein. Under the current model, the protein has at least 3 conformational states: pre-fusion native state, pre-hairpin intermediate state, and post-fusion hairpin state. During viral and target cell membrane fusion, the coiled coil regions (heptad repeats) assume a trimer-of-hairpins structure, positioning the fusion peptide in close proximity to the C-terminal region of the ectodomain. The formation of this structure appears to drive apposition and subsequent fusion of viral and target cell membranes. Membranes fusion leads to delivery of the nucleocapsid into the cytoplasm. This chain is Envelope glycoprotein (env), found in Mus musculus (Mouse).